Here is a 111-residue protein sequence, read N- to C-terminus: Iron-sulfur cluster assembly protein CyaY (111 aa).

The protein belongs to the frataxin family.

Functionally, involved in iron-sulfur (Fe-S) cluster assembly. May act as a regulator of Fe-S biogenesis. The protein is Iron-sulfur cluster assembly protein CyaY of Cupriavidus taiwanensis (strain DSM 17343 / BCRC 17206 / CCUG 44338 / CIP 107171 / LMG 19424 / R1) (Ralstonia taiwanensis (strain LMG 19424)).